Here is a 219-residue protein sequence, read N- to C-terminus: Probable GTP-binding protein EngB (219 aa).

The EngB-type G domain occupies 24 to 207 (VQPEIAFAGR…HALIESWVRP (184 aa)). GTP-binding positions include 32-39 (GRSNAGKS), 59-63 (GRTQH), 81-84 (DLPG), 148-151 (TKCD), and 186-188 (FSA). Mg(2+) is bound by residues serine 39 and threonine 61.

It belongs to the TRAFAC class TrmE-Era-EngA-EngB-Septin-like GTPase superfamily. EngB GTPase family. Mg(2+) serves as cofactor.

Its function is as follows. Necessary for normal cell division and for the maintenance of normal septation. The sequence is that of Probable GTP-binding protein EngB from Burkholderia multivorans (strain ATCC 17616 / 249).